The primary structure comprises 254 residues: Vesicle transport protein USE1 (254 aa).

The Cytoplasmic portion of the chain corresponds to 1 to 228 (MAYISENELK…AYKCGYDCFK (228 aa)). The chain crosses the membrane as a helical; Anchor for type IV membrane protein span at residues 229–249 (VMLIVLIFMSFVSMVLMMKIF). The Lumenal segment spans residues 250-254 (KKAST).

Belongs to the USE1 family.

It localises to the endoplasmic reticulum membrane. Its function is as follows. SNARE that may be involved in targeting and fusion of Golgi-derived retrograde transport vesicles with the ER. The chain is Vesicle transport protein USE1 from Caenorhabditis elegans.